Here is a 379-residue protein sequence, read N- to C-terminus: UDP-N-acetylglucosamine--N-acetylmuramyl-(pentapeptide) pyrophosphoryl-undecaprenol N-acetylglucosamine transferase (379 aa).

Residues 19–21 (TGG), Asn-133, Arg-174, Ser-207, Ile-261, and Gln-306 each bind UDP-N-acetyl-alpha-D-glucosamine.

The protein belongs to the glycosyltransferase 28 family. MurG subfamily.

It is found in the cell inner membrane. It carries out the reaction di-trans,octa-cis-undecaprenyl diphospho-N-acetyl-alpha-D-muramoyl-L-alanyl-D-glutamyl-meso-2,6-diaminopimeloyl-D-alanyl-D-alanine + UDP-N-acetyl-alpha-D-glucosamine = di-trans,octa-cis-undecaprenyl diphospho-[N-acetyl-alpha-D-glucosaminyl-(1-&gt;4)]-N-acetyl-alpha-D-muramoyl-L-alanyl-D-glutamyl-meso-2,6-diaminopimeloyl-D-alanyl-D-alanine + UDP + H(+). It functions in the pathway cell wall biogenesis; peptidoglycan biosynthesis. Its function is as follows. Cell wall formation. Catalyzes the transfer of a GlcNAc subunit on undecaprenyl-pyrophosphoryl-MurNAc-pentapeptide (lipid intermediate I) to form undecaprenyl-pyrophosphoryl-MurNAc-(pentapeptide)GlcNAc (lipid intermediate II). This chain is UDP-N-acetylglucosamine--N-acetylmuramyl-(pentapeptide) pyrophosphoryl-undecaprenol N-acetylglucosamine transferase, found in Porphyromonas gingivalis (strain ATCC 33277 / DSM 20709 / CIP 103683 / JCM 12257 / NCTC 11834 / 2561).